The sequence spans 86 residues: Large ribosomal subunit protein bL27 (86 aa).

Residues 1–24 (MAHKKGTGSTRNGRDSNSKRLGVK) are disordered.

It belongs to the bacterial ribosomal protein bL27 family.

The protein is Large ribosomal subunit protein bL27 of Prochlorococcus marinus (strain MIT 9312).